A 520-amino-acid polypeptide reads, in one-letter code: U3 small nucleolar RNA-associated protein 15 homolog (520 aa).

WD repeat units follow at residues 36-75, 78-117, 120-159, 162-202, 204-242, 246-285, and 287-326; these read KEFGAINKIDFSPVPPYNYAVTASSRVHIYGRYSQEPIKT, RFKDAAYCATYRDDGKLLVAGSEEGSIRLFDISGRAPLRQ, GHTKAVHVVGFLSDKYRIFSGGDDYSSSLWDIPSATEIVS, EHSD…SVMT, EHGHPVESVLLFPSGGLLVSAGGRYVKVWDVLKGGQLLV, NHHKTVTCLCLNSSGQRLLSGSLDRHVKIYSTTSYKVVHS, and NYATSILSLALSPEDETIIVGMTNGVLNVKHRKPEESKEK.

As to quaternary structure, part of the small subunit (SSU) processome, composed of more than 70 proteins and the RNA chaperone small nucleolar RNA (snoRNA) U3. May be a component of the proposed t-UTP subcomplex of the ribosomal small subunit (SSU) processome.

Its subcellular location is the nucleus. It is found in the nucleolus. Functionally, ribosome biogenesis factor. Involved in nucleolar processing of pre-18S ribosomal RNA. Required for optimal pre-ribosomal RNA transcription by RNA polymerase I. Part of the small subunit (SSU) processome, first precursor of the small eukaryotic ribosomal subunit. During the assembly of the SSU processome in the nucleolus, many ribosome biogenesis factors, an RNA chaperone and ribosomal proteins associate with the nascent pre-rRNA and work in concert to generate RNA folding, modifications, rearrangements and cleavage as well as targeted degradation of pre-ribosomal RNA by the RNA exosome. The polypeptide is U3 small nucleolar RNA-associated protein 15 homolog (UTP15) (Gallus gallus (Chicken)).